Here is a 1827-residue protein sequence, read N- to C-terminus: Sucrase-isomaltase, intestinal (1827 aa).

Over 2–12 (ARKKFSGLEIS) the chain is Cytoplasmic. Ser-7 is modified (phosphoserine; by PKA). The chain crosses the membrane as a helical; Signal-anchor for type II membrane protein span at residues 13 to 32 (LIVLFVIVTIIAIALIVVLA). The Lumenal segment spans residues 33–1827 (TKTPAVDEIS…LEEPIEINWS (1795 aa)). Residues 40 to 61 (EISDSTSTPATTRVTTNPSDSG) form a disordered region. Residues 45–55 (TSTPATTRVTT) show a composition bias toward low complexity. The 50-residue stretch at 61-110 (GKCPNVLNDPVNVRINCIPEQFPTEGICAQRGCCWRPWNDSLIPWCFFVD) folds into the P-type 1 domain. 3 disulfides stabilise this stretch: Cys-63–Cys-94, Cys-77–Cys-93, and Cys-88–Cys-106. Residue Asn-99 is glycosylated (N-linked (GlcNAc...) asparagine). An isomaltase region spans residues 110–1007 (DNHGYNVQDM…DLQLNTANAR (898 aa)). Sulfotyrosine is present on residues Tyr-237 and Tyr-239. Substrate-binding residues include Asp-264 and Asp-388. Sulfotyrosine is present on residues Tyr-391 and Tyr-400. 2 N-linked (GlcNAc...) asparagine glycosylation sites follow: Asn-437 and Asn-455. Catalysis depends on Asp-505, which acts as the Nucleophile; for isomaltase activity. Residues Cys-520 and Cys-545 are joined by a disulfide bond. Arg-588 lines the substrate pocket. The For isomaltase activity role is filled by Asp-604. Cys-635 and Cys-646 are joined by a disulfide. Position 662 (His-662) interacts with substrate. Tyr-667, Tyr-763, and Tyr-765 each carry sulfotyrosine. 4 N-linked (GlcNAc...) asparagine glycosylation sites follow: Asn-823, Asn-855, Asn-904, and Asn-926. The 47-residue stretch at 932–978 (NQIFSENERFNCYPDADLATEQKCTQRGCVWRTGSSLSKAPECYFPR) folds into the P-type 2 domain. The segment at 1008–1827 (IKLPSDPIST…LEEPIEINWS (820 aa)) is sucrase. N-linked (GlcNAc...) asparagine glycans are attached at residues Asn-1235, Asn-1303, Asn-1340, and Asn-1354. Asp-1394 acts as the Nucleophile; for sucrase activity in catalysis. The active-site For sucrase activity is the Glu-1397. N-linked (GlcNAc...) asparagine glycosylation occurs at Asn-1403. Asp-1500 (proton donor; for isomaltase activity) is an active-site residue. 6 N-linked (GlcNAc...) asparagine glycosylation sites follow: Asn-1535, Asn-1572, Asn-1675, Asn-1748, Asn-1763, and Asn-1815.

Belongs to the glycosyl hydrolase 31 family. In terms of assembly, the resulting sucrase and isomaltase subunits stay associated with one another in a complex by non-covalent linkages. In terms of processing, the precursor is proteolytically cleaved when exposed to pancreatic proteases in the intestinal lumen. Post-translationally, sulfated. As to expression, expressed in the poorly differentiated crypt cells of the small intestine as well as in the mature villous cells. Expressed at very low levels in the colon.

It localises to the apical cell membrane. The catalysed reaction is Hydrolysis of sucrose and maltose by an alpha-D-glucosidase-type action.. The enzyme catalyses Hydrolysis of (1-&gt;6)-alpha-D-glucosidic linkages in some oligosaccharides produced from starch and glycogen by alpha-amylase, and in isomaltose.. Plays an important role in the final stage of carbohydrate digestion. Isomaltase activity is specific for both alpha-1,4- and alpha-1,6-oligosaccharides. The protein is Sucrase-isomaltase, intestinal (SI) of Homo sapiens (Human).